We begin with the raw amino-acid sequence, 706 residues long: Drebrin (706 aa).

N-acetylalanine is present on A2. One can recognise an ADF-H domain in the interval 3-134; the sequence is GVSFSGHRLE…DAGAIGQRLS (132 aa). S141 and S142 each carry phosphoserine. Residues 209–236 show a composition bias toward basic and acidic residues; it reads ERMEQERQEQEERERRYREREQQIEEHR. The disordered stretch occupies residues 209 to 497; sequence ERMEQERQEQ…AEPAASVTSV (289 aa). Position 241 is a phosphoserine (S241). A compositionally biased stretch (basic and acidic residues) spans 288–298; it reads DNPREFFRQQE. Residues 331–345 are compositionally biased toward low complexity; it reads SDSGPSSSSSSSSSP. The residue at position 344 (S344) is a Phosphoserine. Residues 357-366 are compositionally biased toward polar residues; sequence RTPNLSSSLP. Phosphothreonine is present on residues T379 and T383. A compositionally biased stretch (polar residues) spans 382 to 396; the sequence is PTRSPSDSSTASTPI. Residues S385, S387, and S393 each carry the phosphoserine modification. T394 is modified (phosphothreonine). Over residues 411–422 the composition is skewed to pro residues; sequence QPPPPPPPPPPT. Residues 453 to 497 are compositionally biased toward low complexity; the sequence is AAEPPQAQEPPLLQSSPLEDSMCTESPEQAALAAPAEPAASVTSV. A Phosphoserine modification is found at S468. T550 carries the post-translational modification Phosphothreonine. The tract at residues 633 to 677 is disordered; that stretch reads EPHLLTNGETTQKEGTQASEGYFSQSQEEEFAQSEEPCAKVPPPV. Polar residues predominate over residues 639–651; it reads NGETTQKEGTQAS. Residue S658 is modified to Phosphoserine.

In terms of assembly, interacts with RUFY3. Interacts with CXCR4; this interaction is enhanced by antigenic stimulation. Interacts (via ADF-H domain) with ZMYND8 (via N-terminus); the interaction leads to sequestering of ZMYND8 in the cytoplasm. In terms of tissue distribution, expressed in the hippocampus, with expression in the pyramidal cells of CA1, CA2 and CA3 and in the granule cells of the dentate gyrus (at protein level). Highly expressed in brain, also present in stomach and to a lesser degree in kidney, colon, and urinary bladder. The E2 isoform is specifically expressed in adult stomach, kidney, and cultured cells.

It is found in the cytoplasm. It localises to the cell projection. The protein resides in the dendrite. The protein localises to the cell cortex. Its subcellular location is the cell junction. It is found in the growth cone. Functionally, actin cytoskeleton-organizing protein that plays a role in the formation of cell projections. Required for actin polymerization at immunological synapses (IS) and for the recruitment of the chemokine receptor CXCR4 to IS. Plays a role in dendritic spine morphogenesis and organization, including the localization of the dopamine receptor DRD1 to the dendritic spines. Involved in memory-related synaptic plasticity in the hippocampus. The sequence is that of Drebrin (Dbn1) from Mus musculus (Mouse).